A 147-amino-acid polypeptide reads, in one-letter code: MSTYTPKAGDTTRSWYVIDATDVVLGRLAVEAAKLLRGKHKPTFTPNVDGGDFVIIINADKISLSGDKLTKKFAYSHSGYPGGLRKRAIGDLLAKHPTRVVENAITGMLPHTKLGRQIQKKLKVYAGPEHPHTAQQPVPFEIKQVAQ.

This sequence belongs to the universal ribosomal protein uL13 family. In terms of assembly, part of the 50S ribosomal subunit.

Its function is as follows. This protein is one of the early assembly proteins of the 50S ribosomal subunit, although it is not seen to bind rRNA by itself. It is important during the early stages of 50S assembly. The sequence is that of Large ribosomal subunit protein uL13 from Mycolicibacterium gilvum (strain PYR-GCK) (Mycobacterium gilvum (strain PYR-GCK)).